The following is a 166-amino-acid chain: Ribosome maturation factor RimM (166 aa).

Residues 94–165 (EGEYYLGKLI…TIELKVLDLL (72 aa)) form the PRC barrel domain.

This sequence belongs to the RimM family. In terms of assembly, binds ribosomal protein uS19.

Its subcellular location is the cytoplasm. In terms of biological role, an accessory protein needed during the final step in the assembly of 30S ribosomal subunit, possibly for assembly of the head region. Essential for efficient processing of 16S rRNA. May be needed both before and after RbfA during the maturation of 16S rRNA. It has affinity for free ribosomal 30S subunits but not for 70S ribosomes. This Borrelia garinii subsp. bavariensis (strain ATCC BAA-2496 / DSM 23469 / PBi) (Borreliella bavariensis) protein is Ribosome maturation factor RimM.